A 253-amino-acid polypeptide reads, in one-letter code: Probable U2 small nuclear ribonucleoprotein A' (253 aa).

LRR repeat units lie at residues 20 to 41 (NMREINLRGQKIPVIENMGVTR), 43 to 64 (QFDVIDLTDNDIRKLDNFPTFS), 65 to 86 (RLNTLYLHNNRINYIAPDIATK), and 89 to 110 (NLKTLALTNNNICELGDIEPLA). Residues 123–161 (NPITHKDNYRMYMIYKLPTVRVIDFNRVRLTEREAAKKM) enclose the LRRCT domain. 2 disordered regions span residues 163 to 205 (KGKS…EDRE) and 232 to 253 (VPEKGWNRQMDQNGADGEAMES). The segment covering 169–182 (KARDAIQKSVHTED) has biased composition (basic and acidic residues).

Belongs to the U2 small nuclear ribonucleoprotein A family. In terms of assembly, interacts with rnp-3.

Its subcellular location is the nucleus. Functionally, this protein is associated with sn-RNP U2. It helps the A' protein to bind stem loop IV of U2 snRNA. Required maternally for early embryonic development and zygotically for germline and somatic development. Has a role in the switch from mitosis to meiosis. Might function in alternative splicing. The sequence is that of Probable U2 small nuclear ribonucleoprotein A' (mog-2) from Caenorhabditis elegans.